Reading from the N-terminus, the 201-residue chain is Orotate phosphoribosyltransferase (201 aa).

113 to 121 is a binding site for 5-phospho-alpha-D-ribose 1-diphosphate; sequence EDIITTGKS. Orotate-binding residues include threonine 117 and arginine 145.

Belongs to the purine/pyrimidine phosphoribosyltransferase family. PyrE subfamily. Homodimer. The cofactor is Mg(2+).

The catalysed reaction is orotidine 5'-phosphate + diphosphate = orotate + 5-phospho-alpha-D-ribose 1-diphosphate. It functions in the pathway pyrimidine metabolism; UMP biosynthesis via de novo pathway; UMP from orotate: step 1/2. Functionally, catalyzes the transfer of a ribosyl phosphate group from 5-phosphoribose 1-diphosphate to orotate, leading to the formation of orotidine monophosphate (OMP). The sequence is that of Orotate phosphoribosyltransferase from Helicobacter acinonychis (strain Sheeba).